Reading from the N-terminus, the 63-residue chain is Sperm protamine P1 (63 aa).

The segment at 1-63 (MARYRRHSRS…RYSRRGRRRY (63 aa)) is disordered.

It belongs to the protamine P1 family. Testis.

Its subcellular location is the nucleus. It is found in the chromosome. Functionally, protamines substitute for histones in the chromatin of sperm during the haploid phase of spermatogenesis. They compact sperm DNA into a highly condensed, stable and inactive complex. This chain is Sperm protamine P1 (PRM1), found in Sminthopsis griseoventer (Gray-bellied dunnart).